Here is a 409-residue protein sequence, read N- to C-terminus: NADH-quinone oxidoreductase subunit D 1 (409 aa).

The protein belongs to the complex I 49 kDa subunit family. NDH-1 is composed of 14 different subunits. Subunits NuoB, C, D, E, F, and G constitute the peripheral sector of the complex.

It localises to the cell inner membrane. It carries out the reaction a quinone + NADH + 5 H(+)(in) = a quinol + NAD(+) + 4 H(+)(out). NDH-1 shuttles electrons from NADH, via FMN and iron-sulfur (Fe-S) centers, to quinones in the respiratory chain. The immediate electron acceptor for the enzyme in this species is believed to be ubiquinone. Couples the redox reaction to proton translocation (for every two electrons transferred, four hydrogen ions are translocated across the cytoplasmic membrane), and thus conserves the redox energy in a proton gradient. This Solibacter usitatus (strain Ellin6076) protein is NADH-quinone oxidoreductase subunit D 1.